Consider the following 234-residue polypeptide: uncharacterized protein (234 aa).

Residues 1 to 23 (MVDQIRSPSWKSGFPSHQHQQGS) form a disordered region.

This is an uncharacterized protein from Caenorhabditis elegans.